The sequence spans 115 residues: uncharacterized protein (115 aa).

The disordered stretch occupies residues 1-115; that stretch reads MGETWFLTPN…ARSPERTPSP (115 aa). The span at 7–17 shows a compositional bias: polar residues; it reads LTPNGQSSPGS. Low complexity-rich tracts occupy residues 60–70 and 91–107; these read ASCAPRATPRR and SASAPAGPASSAPWPAR.

This is an uncharacterized protein from Human adenovirus C serotype 2 (HAdV-2).